The chain runs to 550 residues: Carboxypeptidase Y homolog A (550 aa).

Positions 1-18 are cleaved as a signal peptide; the sequence is MKSLVLGLLVGSAIASGP. The propeptide occupies 19–131; sequence LQHVLHAPPE…KLAQYDLRIR (113 aa). 5 cysteine pairs are disulfide-bonded: Cys-185–Cys-424, Cys-319–Cys-333, Cys-343–Cys-366, Cys-350–Cys-359, and Cys-388–Cys-394. N-linked (GlcNAc...) asparagine glycosylation is present at Asn-216. The active site involves Ser-272. Residue Asp-463 is part of the active site. Residues Asn-493 and Asn-514 are each glycosylated (N-linked (GlcNAc...) asparagine). His-525 is a catalytic residue.

This sequence belongs to the peptidase S10 family.

It is found in the vacuole. It carries out the reaction Release of a C-terminal amino acid with broad specificity.. Its function is as follows. Vacuolar carboxypeptidase involved in degradation of small peptides. Digests preferentially peptides containing an aliphatic or hydrophobic residue in P1' position, as well as methionine, leucine or phenylalanine in P1 position of ester substrate. The sequence is that of Carboxypeptidase Y homolog A (CPYA) from Paracoccidioides lutzii (strain ATCC MYA-826 / Pb01) (Paracoccidioides brasiliensis).